Consider the following 264-residue polypeptide: Proteasome subunit beta type-4 (264 aa).

Met1 carries the N-acetylmethionine modification. Residues 1–45 constitute a propeptide that is removed on maturation; sequence MEALLESRSGLWAGGPAPGQFYRIPPTPGSSVDPVSALYGSPITR. Position 102 is a phosphotyrosine (Tyr102).

The protein belongs to the peptidase T1B family. As to quaternary structure, the 26S proteasome consists of a 20S proteasome core and two 19S regulatory subunits. The 20S proteasome core is a barrel-shaped complex made of 28 subunits that are arranged in four stacked rings. The two outer rings are each formed by seven alpha subunits, and the two inner rings are formed by seven beta subunits. The proteolytic activity is exerted by three beta-subunits PSMB5, PSMB6 and PSMB7. Forms a ternary complex with SMAD1 and OAZ1 before PSMB4 is incorporated into the 20S proteasome. Interacts with PRPF19.

It localises to the cytoplasm. The protein resides in the nucleus. Non-catalytic component of the 20S core proteasome complex involved in the proteolytic degradation of most intracellular proteins. This complex plays numerous essential roles within the cell by associating with different regulatory particles. Associated with two 19S regulatory particles, forms the 26S proteasome and thus participates in the ATP-dependent degradation of ubiquitinated proteins. The 26S proteasome plays a key role in the maintenance of protein homeostasis by removing misfolded or damaged proteins that could impair cellular functions, and by removing proteins whose functions are no longer required. Associated with the PA200 or PA28, the 20S proteasome mediates ubiquitin-independent protein degradation. This type of proteolysis is required in several pathways including spermatogenesis (20S-PA200 complex) or generation of a subset of MHC class I-presented antigenic peptides (20S-PA28 complex). SMAD1/OAZ1/PSMB4 complex mediates the degradation of the CREBBP/EP300 repressor SNIP1. In Bos taurus (Bovine), this protein is Proteasome subunit beta type-4 (PSMB4).